Reading from the N-terminus, the 161-residue chain is 3-isopropylmalate dehydratase small subunit (161 aa).

The protein belongs to the LeuD family. LeuD type 2 subfamily. In terms of assembly, heterodimer of LeuC and LeuD.

It carries out the reaction (2R,3S)-3-isopropylmalate = (2S)-2-isopropylmalate. Its pathway is amino-acid biosynthesis; L-leucine biosynthesis; L-leucine from 3-methyl-2-oxobutanoate: step 2/4. Functionally, catalyzes the isomerization between 2-isopropylmalate and 3-isopropylmalate, via the formation of 2-isopropylmaleate. The sequence is that of 3-isopropylmalate dehydratase small subunit from Clostridium beijerinckii (strain ATCC 51743 / NCIMB 8052) (Clostridium acetobutylicum).